A 313-amino-acid chain; its full sequence is Methionyl-tRNA formyltransferase (313 aa).

109-112 (SLLP) is a binding site for (6S)-5,6,7,8-tetrahydrofolate.

It belongs to the Fmt family.

It carries out the reaction L-methionyl-tRNA(fMet) + (6R)-10-formyltetrahydrofolate = N-formyl-L-methionyl-tRNA(fMet) + (6S)-5,6,7,8-tetrahydrofolate + H(+). In terms of biological role, attaches a formyl group to the free amino group of methionyl-tRNA(fMet). The formyl group appears to play a dual role in the initiator identity of N-formylmethionyl-tRNA by promoting its recognition by IF2 and preventing the misappropriation of this tRNA by the elongation apparatus. The polypeptide is Methionyl-tRNA formyltransferase (Pelotomaculum thermopropionicum (strain DSM 13744 / JCM 10971 / SI)).